The following is a 136-amino-acid chain: Large ribosomal subunit protein uL16 (136 aa).

This sequence belongs to the universal ribosomal protein uL16 family. As to quaternary structure, part of the 50S ribosomal subunit.

In terms of biological role, binds 23S rRNA and is also seen to make contacts with the A and possibly P site tRNAs. This is Large ribosomal subunit protein uL16 from Actinobacillus pleuropneumoniae serotype 5b (strain L20).